Here is a 302-residue protein sequence, read N- to C-terminus: 33 kDa chaperonin (302 aa).

Cystine bridges form between Cys-234/Cys-236 and Cys-267/Cys-270.

Belongs to the HSP33 family. Under oxidizing conditions two disulfide bonds are formed involving the reactive cysteines. Under reducing conditions zinc is bound to the reactive cysteines and the protein is inactive.

The protein localises to the cytoplasm. In terms of biological role, redox regulated molecular chaperone. Protects both thermally unfolding and oxidatively damaged proteins from irreversible aggregation. Plays an important role in the bacterial defense system toward oxidative stress. This chain is 33 kDa chaperonin, found in Neisseria gonorrhoeae (strain NCCP11945).